Consider the following 365-residue polypeptide: Histidinol-phosphate aminotransferase (365 aa).

K227 bears the N6-(pyridoxal phosphate)lysine mark.

It belongs to the class-II pyridoxal-phosphate-dependent aminotransferase family. Histidinol-phosphate aminotransferase subfamily. In terms of assembly, homodimer. It depends on pyridoxal 5'-phosphate as a cofactor.

The enzyme catalyses L-histidinol phosphate + 2-oxoglutarate = 3-(imidazol-4-yl)-2-oxopropyl phosphate + L-glutamate. It participates in amino-acid biosynthesis; L-histidine biosynthesis; L-histidine from 5-phospho-alpha-D-ribose 1-diphosphate: step 7/9. In Campylobacter concisus (strain 13826), this protein is Histidinol-phosphate aminotransferase.